Reading from the N-terminus, the 549-residue chain is Chaperonin GroEL 2 (549 aa).

Residues 30–33 (TLGP), Lys51, 87–91 (DGTTT), Gly415, 479–481 (NAA), and Asp495 contribute to the ATP site.

This sequence belongs to the chaperonin (HSP60) family. Forms a cylinder of 14 subunits composed of two heptameric rings stacked back-to-back. Interacts with the co-chaperonin GroES.

It is found in the cytoplasm. The catalysed reaction is ATP + H2O + a folded polypeptide = ADP + phosphate + an unfolded polypeptide.. In terms of biological role, together with its co-chaperonin GroES, plays an essential role in assisting protein folding. The GroEL-GroES system forms a nano-cage that allows encapsulation of the non-native substrate proteins and provides a physical environment optimized to promote and accelerate protein folding. In Polaromonas naphthalenivorans (strain CJ2), this protein is Chaperonin GroEL 2.